Reading from the N-terminus, the 278-residue chain is Large ribosomal subunit protein uL2 (278 aa).

The disordered stretch occupies residues 224–262 (VMNPVDHPLGGGEGRTSGGRHPVTPWGKPTKGFKTRKTR).

This sequence belongs to the universal ribosomal protein uL2 family. Part of the 50S ribosomal subunit. Forms a bridge to the 30S subunit in the 70S ribosome.

Its function is as follows. One of the primary rRNA binding proteins. Required for association of the 30S and 50S subunits to form the 70S ribosome, for tRNA binding and peptide bond formation. It has been suggested to have peptidyltransferase activity; this is somewhat controversial. Makes several contacts with the 16S rRNA in the 70S ribosome. This chain is Large ribosomal subunit protein uL2, found in Leptospira biflexa serovar Patoc (strain Patoc 1 / Ames).